The chain runs to 206 residues: dCTP deaminase, dUMP-forming (206 aa).

DCTP contacts are provided by residues 117 to 122, Asp-135, 143 to 145, Gln-163, Tyr-177, Lys-184, and Gln-188; these read RSSFGR and TLE. Glu-145 (proton donor/acceptor) is an active-site residue.

The protein belongs to the dCTP deaminase family. In terms of assembly, homotrimer.

It catalyses the reaction dCTP + 2 H2O = dUMP + NH4(+) + diphosphate. It participates in pyrimidine metabolism; dUMP biosynthesis; dUMP from dCTP: step 1/1. Its function is as follows. Bifunctional enzyme that catalyzes both the deamination of dCTP to dUTP and the hydrolysis of dUTP to dUMP without releasing the toxic dUTP intermediate. The polypeptide is dCTP deaminase, dUMP-forming (Methanococcus maripaludis (strain DSM 14266 / JCM 13030 / NBRC 101832 / S2 / LL)).